The following is a 682-amino-acid chain: Putative L-type lectin-domain containing receptor kinase I.1 (682 aa).

The N-terminal stretch at 1–19 is a signal peptide; sequence MAQRLHLLLLLFLICFVNL. Residues 20–292 lie on the Extracellular side of the membrane; the sequence is ISFSSQQDLS…RPKKPEKTSP (273 aa). The tract at residues 27 to 264 is legume-lectin like; sequence DLSFIYNGFN…YQYILGWSFS (238 aa). N-linked (GlcNAc...) asparagine glycosylation is found at Asn60, Asn130, Asn187, Asn210, and Asn231. The chain crosses the membrane as a helical span at residues 293–313; it reads LLIVLLIILAIIVMVVVGGFY. Over 314–682 the chain is Cytoplasmic; sequence LYRRKKYAEV…SHTIIYGDGR (369 aa). A Protein kinase domain is found at 348–622; sequence FNKDGRLGRG…VQYINRHQRL (275 aa). Residues 354–362 and Lys376 each bind ATP; that span reads LGRGGFGEV. Asp472 serves as the catalytic Proton acceptor.

The protein in the C-terminal section; belongs to the protein kinase superfamily. Ser/Thr protein kinase family. This sequence in the N-terminal section; belongs to the leguminous lectin family.

It localises to the cell membrane. It catalyses the reaction L-seryl-[protein] + ATP = O-phospho-L-seryl-[protein] + ADP + H(+). The catalysed reaction is L-threonyl-[protein] + ATP = O-phospho-L-threonyl-[protein] + ADP + H(+). Its function is as follows. Involved in resistance response to the pathogenic fungus Alternaria brassicicola. The protein is Putative L-type lectin-domain containing receptor kinase I.1 of Arabidopsis thaliana (Mouse-ear cress).